The primary structure comprises 503 residues: Glucosaminyl-phosphatidylinositol-acyltransferase PIGW (503 aa).

Over Met-1 to Glu-21 the chain is Lumenal. Residue Asn-15 is glycosylated (N-linked (GlcNAc...) asparagine). The helical transmembrane segment at Ile-22 to Leu-42 threads the bilayer. Residues Ser-43–Arg-56 are Cytoplasmic-facing. A helical membrane pass occupies residues Phe-57 to Phe-75. The Lumenal segment spans residues Ser-76 to Phe-78. Residues Val-79–Tyr-98 traverse the membrane as a helical segment. At Cys-99 to Cys-131 the chain is on the cytoplasmic side. A helical membrane pass occupies residues Phe-132–Phe-152. The Lumenal segment spans residues Pro-153 to Glu-160. A helical transmembrane segment spans residues Leu-161–Val-181. The Cytoplasmic portion of the chain corresponds to Ser-182 to Ser-201. Residues Leu-202–Val-222 traverse the membrane as a helical segment. The Lumenal segment spans residues Asp-223–Asn-236. The helical transmembrane segment at Phe-237–Leu-257 threads the bilayer. Residues Asn-258–Arg-259 are Cytoplasmic-facing. The chain crosses the membrane as a helical span at residues Ser-260–Leu-280. Over Lys-281–Gly-304 the chain is Lumenal. A helical membrane pass occupies residues Ile-305–Val-325. Residues Leu-326–Lys-337 are Cytoplasmic-facing. The chain crosses the membrane as a helical span at residues Val-338–Val-358. The Lumenal portion of the chain corresponds to Asn-359–Asn-369. Residues Leu-370–Gly-390 form a helical membrane-spanning segment. The Cytoplasmic portion of the chain corresponds to Asp-391 to Gln-447. Phosphoserine is present on Ser-415. A helical membrane pass occupies residues Leu-448 to Leu-468. The Lumenal portion of the chain corresponds to His-469–Thr-472. A helical membrane pass occupies residues Pro-473–Leu-493. Residues His-494–Trp-503 are Cytoplasmic-facing.

It belongs to the PIGW family.

It is found in the endoplasmic reticulum membrane. The protein operates within glycolipid biosynthesis; glycosylphosphatidylinositol-anchor biosynthesis. Functionally, acyltransferase that catalyzes the acyl transfer from an acyl-CoA at the 2-OH position of the inositol ring of glucosaminyl phosphatidylinositol (GlcN-PI) to generate glucosaminyl acyl phosphatidylinositol (GlcN-(acyl)PI) and participates in the fourth step of GPI-anchor biosynthesis. Required for the transport of GPI-anchored proteins to the plasma membrane. Acetylation during GPI-anchor biosynthesis is not essential for the subsequent mannosylation and is usually removed soon after the attachment of GPIs to proteins. This is Glucosaminyl-phosphatidylinositol-acyltransferase PIGW from Bos taurus (Bovine).